We begin with the raw amino-acid sequence, 234 residues long: Carboxy-S-adenosyl-L-methionine synthase (234 aa).

Residues Y35, 60–62 (GSS), 83–84 (DN), N124, and R191 contribute to the S-adenosyl-L-methionine site.

It belongs to the class I-like SAM-binding methyltransferase superfamily. Cx-SAM synthase family. As to quaternary structure, homodimer.

The enzyme catalyses prephenate + S-adenosyl-L-methionine = carboxy-S-adenosyl-L-methionine + 3-phenylpyruvate + H2O. In terms of biological role, catalyzes the conversion of S-adenosyl-L-methionine (SAM) to carboxy-S-adenosyl-L-methionine (Cx-SAM). The chain is Carboxy-S-adenosyl-L-methionine synthase from Nautilia profundicola (strain ATCC BAA-1463 / DSM 18972 / AmH).